Reading from the N-terminus, the 275-residue chain is NADPH-dependent 7-cyano-7-deazaguanine reductase (275 aa).

81-83 is a binding site for substrate; the sequence is IES. Position 83–84 (83–84) interacts with NADPH; sequence SK. The active-site Thioimide intermediate is C181. The Proton donor role is filled by D188. A substrate-binding site is contributed by 220 to 221; that stretch reads HE. An NADPH-binding site is contributed by 249–250; that stretch reads RG.

The protein belongs to the GTP cyclohydrolase I family. QueF type 2 subfamily. Homodimer.

The protein localises to the cytoplasm. The catalysed reaction is 7-aminomethyl-7-carbaguanine + 2 NADP(+) = 7-cyano-7-deazaguanine + 2 NADPH + 3 H(+). It participates in tRNA modification; tRNA-queuosine biosynthesis. In terms of biological role, catalyzes the NADPH-dependent reduction of 7-cyano-7-deazaguanine (preQ0) to 7-aminomethyl-7-deazaguanine (preQ1). The protein is NADPH-dependent 7-cyano-7-deazaguanine reductase of Xylella fastidiosa (strain M23).